Reading from the N-terminus, the 522-residue chain is Cytochrome P450 9c1 (522 aa).

C464 contributes to the heme binding site.

Belongs to the cytochrome P450 family. It depends on heme as a cofactor.

It is found in the endoplasmic reticulum membrane. It localises to the microsome membrane. Functionally, may be involved in the metabolism of insect hormones and in the breakdown of synthetic insecticides. This is Cytochrome P450 9c1 (Cyp9c1) from Drosophila melanogaster (Fruit fly).